Consider the following 180-residue polypeptide: MFRGQMFAVQRMGSALMHGGGGGTRIIGVAAARATAPTVGSSPSMASARFYHPKVIDHYTNPRNVGSLDKNLPNVGTGLVGAPACGDVMKLQIQVNDETGVIENVKFKTFGCGSAIASSSYMTELVRGKTLEDAAKIKNTEIARELSLPPVKLHCSMLAEDAIKAAIKDYQAKRPTTQLK.

It belongs to the NifU family. In terms of assembly, component of the core Fe-S cluster (ISC) assembly machinery. Requires [2Fe-2S] cluster as cofactor.

The protein localises to the mitochondrion matrix. The protein operates within cofactor biosynthesis; iron-sulfur cluster biosynthesis. Its function is as follows. Scaffold protein for the de novo synthesis of iron-sulfur (Fe-S) clusters within mitochondria, which is required for maturation of both mitochondrial and cytoplasmic [2Fe-2S] and [4Fe-4S] proteins. First, a [2Fe-2S] cluster is transiently assembled on the scaffold protein ISU1. In a second step, the cluster is released from ISU1, transferred to a glutaredoxin, followed by the formation of mitochondrial [2Fe-2S] proteins, the synthesis of [4Fe-4S] clusters and their target-specific insertion into the recipient apoproteins. Cluster assembly on ISU1 depends on the function of the cysteine desulfurase complex NFS1-ISD11, which serves as the sulfur donor for cluster synthesis, the iron-binding protein frataxin as the putative iron donor, and the electron transfer chain comprised of ferredoxin reductase and ferredoxin, which receive their electrons from NADH. The polypeptide is Iron sulfur cluster assembly protein 1, mitochondrial (ISU1) (Kluyveromyces lactis (strain ATCC 8585 / CBS 2359 / DSM 70799 / NBRC 1267 / NRRL Y-1140 / WM37) (Yeast)).